The chain runs to 513 residues: 2-isopropylmalate synthase (513 aa).

The region spanning 5–268 (LIIFDTTLRD…DLRVDTSQIV (264 aa)) is the Pyruvate carboxyltransferase domain. 4 residues coordinate Mn(2+): aspartate 14, histidine 202, histidine 204, and asparagine 239. The regulatory domain stretch occupies residues 394–513 (RLLALSQHSE…SKAERVAAQG (120 aa)).

Belongs to the alpha-IPM synthase/homocitrate synthase family. LeuA type 1 subfamily. As to quaternary structure, homodimer. Mn(2+) serves as cofactor.

It is found in the cytoplasm. It catalyses the reaction 3-methyl-2-oxobutanoate + acetyl-CoA + H2O = (2S)-2-isopropylmalate + CoA + H(+). It functions in the pathway amino-acid biosynthesis; L-leucine biosynthesis; L-leucine from 3-methyl-2-oxobutanoate: step 1/4. Catalyzes the condensation of the acetyl group of acetyl-CoA with 3-methyl-2-oxobutanoate (2-ketoisovalerate) to form 3-carboxy-3-hydroxy-4-methylpentanoate (2-isopropylmalate). The protein is 2-isopropylmalate synthase of Leptothrix cholodnii (strain ATCC 51168 / LMG 8142 / SP-6) (Leptothrix discophora (strain SP-6)).